The primary structure comprises 300 residues: MEGNIVSGKAVADNITNILATCISDLKAQHNLTPCLIVVLVGDDPASQLYVRNKQRKAEMLGLRSETMLLPSTISESSLIEKIHQLNNDDSVHGILVQLPVPRHIDKNLIINTIDPKKDVDGFHNENVGRLFTGQKKNCLVPCTPQGCLYLIKTITRNLSGSDAVVIGRSNIVGKPMACLLLGENCTVTTVHSATRDLPDYCRRADILVAAVGIPRFVKYSWVKHGAIVIDVGINSIEEDGVKKFVGDVDFAEVNKIASAITPVPGGVGPMTIAFLMVNTIIAACNQSGIDGFLEKYLDL.

Residues 168 to 170 (GRS), S193, and I234 each bind NADP(+).

The protein belongs to the tetrahydrofolate dehydrogenase/cyclohydrolase family. In terms of assembly, homodimer.

The enzyme catalyses (6R)-5,10-methylene-5,6,7,8-tetrahydrofolate + NADP(+) = (6R)-5,10-methenyltetrahydrofolate + NADPH. The catalysed reaction is (6R)-5,10-methenyltetrahydrofolate + H2O = (6R)-10-formyltetrahydrofolate + H(+). Its pathway is one-carbon metabolism; tetrahydrofolate interconversion. Functionally, catalyzes the oxidation of 5,10-methylenetetrahydrofolate to 5,10-methenyltetrahydrofolate and then the hydrolysis of 5,10-methenyltetrahydrofolate to 10-formyltetrahydrofolate. This chain is Bifunctional protein FolD, found in Ehrlichia ruminantium (strain Welgevonden).